Here is a 188-residue protein sequence, read N- to C-terminus: MPEINFAQIEYAVRLILEAIGEDPNREGLVDTPKRVAKMYAEVFAGLQEDPKQHFQTVFSEEHEELVLVKDIPFYSMCEHHLVPFFGAAHVAYIPREGKVTGLSKLARAVEAVARRPQLQERITATIADSIVEALEPHGVMVVVEAEHMCMTMRGVKKPGSKTVTTAVRGVFETDANARAEVLSLIKA.

C78, H81, and C150 together coordinate Zn(2+).

This sequence belongs to the GTP cyclohydrolase I family. Toroid-shaped homodecamer, composed of two pentamers of five dimers.

It carries out the reaction GTP + H2O = 7,8-dihydroneopterin 3'-triphosphate + formate + H(+). Its pathway is cofactor biosynthesis; 7,8-dihydroneopterin triphosphate biosynthesis; 7,8-dihydroneopterin triphosphate from GTP: step 1/1. In Geobacillus kaustophilus (strain HTA426), this protein is GTP cyclohydrolase 1.